The sequence spans 215 residues: Pyridoxine/pyridoxamine 5'-phosphate oxidase (215 aa).

Substrate-binding positions include 9–12 and K67; that span reads RRDY. FMN-binding positions include 62–67, 77–78, K84, and Q106; these read RVVLLK and FT. Substrate contacts are provided by Y124, R128, and S132. FMN is bound by residues 141 to 142 and W186; that span reads QS. Residue 192 to 194 coordinates substrate; sequence RLH. Position 196 (R196) interacts with FMN.

It belongs to the pyridoxamine 5'-phosphate oxidase family. In terms of assembly, homodimer. FMN is required as a cofactor.

The catalysed reaction is pyridoxamine 5'-phosphate + O2 + H2O = pyridoxal 5'-phosphate + H2O2 + NH4(+). It carries out the reaction pyridoxine 5'-phosphate + O2 = pyridoxal 5'-phosphate + H2O2. It participates in cofactor metabolism; pyridoxal 5'-phosphate salvage; pyridoxal 5'-phosphate from pyridoxamine 5'-phosphate: step 1/1. Its pathway is cofactor metabolism; pyridoxal 5'-phosphate salvage; pyridoxal 5'-phosphate from pyridoxine 5'-phosphate: step 1/1. Its function is as follows. Catalyzes the oxidation of either pyridoxine 5'-phosphate (PNP) or pyridoxamine 5'-phosphate (PMP) into pyridoxal 5'-phosphate (PLP). This chain is Pyridoxine/pyridoxamine 5'-phosphate oxidase, found in Chromohalobacter salexigens (strain ATCC BAA-138 / DSM 3043 / CIP 106854 / NCIMB 13768 / 1H11).